A 253-amino-acid polypeptide reads, in one-letter code: ATP synthase subunit a (253 aa).

Transmembrane regions (helical) follow at residues 34–54 (SSLFLIIAVFLLLFWTSLSFY), 89–109 (YFPFIFTLHLLLLYCNLIGMI), 118–138 (HIVFTFGLALSIFIGINLIGI), 156–178 (LAIVPLLITIEFLSYIVKVFTLS), 203–223 (LSAGGLLAIFHLIPLALLLAL), and 226–246 (LELAIAGLQAYVFTLLTCIYL).

Belongs to the ATPase A chain family. In terms of assembly, F-type ATPases have 2 components, CF(1) - the catalytic core - and CF(0) - the membrane proton channel. CF(1) has five subunits: alpha(3), beta(3), gamma(1), delta(1), epsilon(1). CF(0) has three main subunits: a, b and c.

Its subcellular location is the mitochondrion inner membrane. Its function is as follows. Mitochondrial membrane ATP synthase (F(1)F(0) ATP synthase or Complex V) produces ATP from ADP in the presence of a proton gradient across the membrane which is generated by electron transport complexes of the respiratory chain. F-type ATPases consist of two structural domains, F(1) - containing the extramembraneous catalytic core and F(0) - containing the membrane proton channel, linked together by a central stalk and a peripheral stalk. During catalysis, ATP synthesis in the catalytic domain of F(1) is coupled via a rotary mechanism of the central stalk subunits to proton translocation. Key component of the proton channel; it may play a direct role in the translocation of protons across the membrane. This is ATP synthase subunit a (ATP6) from Chondrus crispus (Carrageen Irish moss).